The chain runs to 274 residues: Type III pantothenate kinase (274 aa).

An ATP-binding site is contributed by 6 to 13 (DVRNTHTV). 109-112 (GADR) provides a ligand contact to substrate. Aspartate 111 serves as the catalytic Proton acceptor. Aspartate 131 provides a ligand contact to K(+). Serine 134 contacts ATP. Position 186 (threonine 186) interacts with substrate.

The protein belongs to the type III pantothenate kinase family. In terms of assembly, homodimer. NH4(+) is required as a cofactor. Requires K(+) as cofactor.

It is found in the cytoplasm. It catalyses the reaction (R)-pantothenate + ATP = (R)-4'-phosphopantothenate + ADP + H(+). The protein operates within cofactor biosynthesis; coenzyme A biosynthesis; CoA from (R)-pantothenate: step 1/5. Functionally, catalyzes the phosphorylation of pantothenate (Pan), the first step in CoA biosynthesis. The protein is Type III pantothenate kinase of Mycobacterium leprae (strain Br4923).